The following is a 391-amino-acid chain: Curcumin synthase 2 (391 aa).

Cys-166 is an active-site residue.

The protein belongs to the thiolase-like superfamily. Chalcone/stilbene synthases family. Homodimer.

The enzyme catalyses (E)-feruloylacetyl-CoA + (E)-feruloyl-CoA + H2O = curcumin + CO2 + 2 CoA. The protein operates within secondary metabolite biosynthesis; flavonoid biosynthesis. Catalyzes the synthesis of curcumin by condensing feruloyl-CoA with a diketide-CoA in the curcuminoid biosynthesis. The sequence is that of Curcumin synthase 2 (CURS2) from Curcuma longa (Turmeric).